A 451-amino-acid chain; its full sequence is Tubulin beta-1 chain (451 aa).

GTP-binding residues include glutamine 11, glutamate 73, serine 142, glycine 146, threonine 147, glycine 148, asparagine 208, and asparagine 230. Glutamate 73 serves as a coordination point for Mg(2+). Residues 430–451 are disordered; the sequence is QEATADDEAEFEEEGEVEGEYA. The segment covering 433 to 451 has biased composition (acidic residues); it reads TADDEAEFEEEGEVEGEYA.

This sequence belongs to the tubulin family. In terms of assembly, dimer of alpha and beta chains. A typical microtubule is a hollow water-filled tube with an outer diameter of 25 nm and an inner diameter of 15 nM. Alpha-beta heterodimers associate head-to-tail to form protofilaments running lengthwise along the microtubule wall with the beta-tubulin subunit facing the microtubule plus end conferring a structural polarity. Microtubules usually have 13 protofilaments but different protofilament numbers can be found in some organisms and specialized cells. Mg(2+) is required as a cofactor.

The protein resides in the cytoplasm. The protein localises to the cytoskeleton. In terms of biological role, tubulin is the major constituent of microtubules, a cylinder consisting of laterally associated linear protofilaments composed of alpha- and beta-tubulin heterodimers. Microtubules grow by the addition of GTP-tubulin dimers to the microtubule end, where a stabilizing cap forms. Below the cap, tubulin dimers are in GDP-bound state, owing to GTPase activity of alpha-tubulin. This is Tubulin beta-1 chain from Homarus americanus (American lobster).